The following is a 312-amino-acid chain: Pseudouridine-5'-phosphate glycosidase (312 aa).

The active-site Proton donor is Glu-31. Residues Lys-93 and Val-113 each contribute to the substrate site. Asp-145 lines the Mn(2+) pocket. 147-149 serves as a coordination point for substrate; it reads SAD. Residue Lys-166 is the Nucleophile of the active site.

This sequence belongs to the pseudouridine-5'-phosphate glycosidase family. As to quaternary structure, homotrimer. Requires Mn(2+) as cofactor. The cofactor is Fe(2+). Co(2+) is required as a cofactor.

It catalyses the reaction D-ribose 5-phosphate + uracil = psi-UMP + H2O. With respect to regulation, inhibited by Zn(2+) and Ni(2+). Functionally, catalyzes the reversible cleavage of pseudouridine 5'-phosphate (PsiMP) to ribose 5-phosphate and uracil. Functions biologically in the cleavage direction, as part of a pseudouridine degradation pathway. This is Pseudouridine-5'-phosphate glycosidase from Escherichia coli (strain K12).